We begin with the raw amino-acid sequence, 509 residues long: Steroid 17-alpha-hydroxylase/17,20 lyase (509 aa).

Cys440 provides a ligand contact to heme.

The protein belongs to the cytochrome P450 family. The cofactor is heme.

The protein resides in the endoplasmic reticulum membrane. It is found in the microsome membrane. The enzyme catalyses a C21-steroid + reduced [NADPH--hemoprotein reductase] + O2 = a 17alpha-hydroxy-C21-steroid + oxidized [NADPH--hemoprotein reductase] + H2O + H(+). The catalysed reaction is progesterone + reduced [NADPH--hemoprotein reductase] + O2 = 17alpha-hydroxyprogesterone + oxidized [NADPH--hemoprotein reductase] + H2O + H(+). It carries out the reaction pregnenolone + reduced [NADPH--hemoprotein reductase] + O2 = 17alpha-hydroxypregnenolone + oxidized [NADPH--hemoprotein reductase] + H2O + H(+). It catalyses the reaction 17alpha-hydroxyprogesterone + reduced [NADPH--hemoprotein reductase] + O2 = androst-4-ene-3,17-dione + acetate + oxidized [NADPH--hemoprotein reductase] + H2O + 2 H(+). The enzyme catalyses 17alpha-hydroxyprogesterone + reduced [NADPH--hemoprotein reductase] + O2 = 16alpha,17alpha-dihydroxyprogesterone + oxidized [NADPH--hemoprotein reductase] + H2O + H(+). The catalysed reaction is 16alpha,17alpha-dihydroxyprogesterone + reduced [NADPH--hemoprotein reductase] + O2 = 6beta,16alpha,17alpha-trihydroxyprogesterone + oxidized [NADPH--hemoprotein reductase] + H2O + H(+). It carries out the reaction 17alpha-hydroxypregnenolone + reduced [NADPH--hemoprotein reductase] + O2 = 3beta-hydroxyandrost-5-en-17-one + acetate + oxidized [NADPH--hemoprotein reductase] + H2O + 2 H(+). It catalyses the reaction 16alpha,17alpha-dihydroxypregnenolone + reduced [NADPH--hemoprotein reductase] + O2 = 3beta,16alpha-dihydroxy-androst-5-en-17-one + acetate + oxidized [NADPH--hemoprotein reductase] + H2O + 2 H(+). The enzyme catalyses 3beta-hydroxyandrost-5-en-17-one + reduced [NADPH--hemoprotein reductase] + O2 = 3beta,16alpha-dihydroxy-androst-5-en-17-one + oxidized [NADPH--hemoprotein reductase] + H2O + H(+). The catalysed reaction is androst-4-ene-3,17-dione + reduced [NADPH--hemoprotein reductase] + O2 = 16alpha-hydroxyandrost-4-ene-3,17-dione + oxidized [NADPH--hemoprotein reductase] + H2O + H(+). It functions in the pathway steroid hormone biosynthesis. It participates in steroid biosynthesis; glucocorticoid biosynthesis. Its activity is regulated as follows. Regulated predominantly by intracellular cAMP levels. The 17,20-lyase activity is stimulated by cytochrome b5, which acts as an allosteric effector increasing the Vmax of the lyase activity. A cytochrome P450 monooxygenase involved in corticoid and androgen biosynthesis. Catalyzes 17-alpha hydroxylation of C21 steroids, which is common for both pathways. A second oxidative step, required only for androgen synthesis, involves an acyl-carbon cleavage. The 17-alpha hydroxy intermediates, as part of adrenal glucocorticoids biosynthesis pathway, are precursors of cortisol. Hydroxylates steroid hormones, pregnenolone and progesterone to form 17-alpha hydroxy metabolites, followed by the cleavage of the C17-C20 bond to form C19 steroids, dehydroepiandrosterone (DHEA) and androstenedione. Has 16-alpha hydroxylase activity. Catalyzes 16-alpha hydroxylation of 17-alpha hydroxy pregnenolone, followed by the cleavage of the C17-C20 bond to form 16-alpha-hydroxy DHEA. Also 16-alpha hydroxylates androgens, relevant for estriol synthesis. Mechanistically, uses molecular oxygen inserting one oxygen atom into a substrate, and reducing the second into a water molecule, with two electrons provided by NADPH via cytochrome P450 reductase (CPR; NADPH-ferrihemoprotein reductase). In Peromyscus leucopus (White-footed mouse), this protein is Steroid 17-alpha-hydroxylase/17,20 lyase (Cyp17a1).